Consider the following 364-residue polypeptide: MSDDKLDTLPDLQSETSHVTTPHRQNDLLRQAVTHGRPPPVPSTSTSGKKREMSELPWSDFFDEKKDANIDGDVFNVYIKGNEGPIFYLLHGGGYSGLTWACFAKELATLISCRVVAPDLRGHGDTKCSDEHDLSKETQIKDIGAIFKNIFGEDDSPVCIVGHSMGGALAIHTLNAKMISSKVAALIVIDVVEGSAMEALGGMVHFLHSRPSSFPSIEKAIHWCLSSGTARNPTAARVSMPSQIREVSEHEYTWRIDLTTTEQYWKGWFEGLSKEFLGCSVPKMLVLAGVDRLDRDLTIGQMQGKFQTCVLPKVGHCVQEDSPQNLADEVGRFACRHRIAQPKFSALASPPDPAILEYRKRHHQ.

The interval 1 to 53 (MSDDKLDTLPDLQSETSHVTTPHRQNDLLRQAVTHGRPPPVPSTSTSGKKREM) is disordered. The segment covering 11-23 (DLQSETSHVTTPH) has biased composition (polar residues). Active-site residues include Ser164, Asp190, and His316.

This sequence belongs to the AB hydrolase superfamily.

The enzyme catalyses [phosphatase 2A protein]-C-terminal L-leucine methyl ester + H2O = [phosphatase 2A protein]-C-terminal L-leucine + methanol + H(+). Its function is as follows. Demethylates proteins that have been reversibly carboxymethylated. The sequence is that of Probable protein phosphatase methylesterase 1 from Caenorhabditis elegans.